The sequence spans 207 residues: Inhibitor of hydrogen peroxide resistance (207 aa).

The segment at residues M163–A182 is a DNA-binding region (H-T-H motif).

This sequence belongs to the IprA family.

Involved in oxidative stress resistance. The sequence is that of Inhibitor of hydrogen peroxide resistance from Salmonella typhimurium (strain LT2 / SGSC1412 / ATCC 700720).